The sequence spans 68 residues: Small integral membrane protein 10-like protein 1 (68 aa).

The interval 1 to 21 (MAPAAAPSSLAVRASSPAATP) is disordered.

The chain is Small integral membrane protein 10-like protein 1 from Homo sapiens (Human).